A 335-amino-acid polypeptide reads, in one-letter code: Tetraacyldisaccharide 4'-kinase (335 aa).

Val58–Thr65 contributes to the ATP binding site.

It belongs to the LpxK family.

The enzyme catalyses a lipid A disaccharide + ATP = a lipid IVA + ADP + H(+). The protein operates within glycolipid biosynthesis; lipid IV(A) biosynthesis; lipid IV(A) from (3R)-3-hydroxytetradecanoyl-[acyl-carrier-protein] and UDP-N-acetyl-alpha-D-glucosamine: step 6/6. Functionally, transfers the gamma-phosphate of ATP to the 4'-position of a tetraacyldisaccharide 1-phosphate intermediate (termed DS-1-P) to form tetraacyldisaccharide 1,4'-bis-phosphate (lipid IVA). The polypeptide is Tetraacyldisaccharide 4'-kinase (Hydrogenovibrio crunogenus (strain DSM 25203 / XCL-2) (Thiomicrospira crunogena)).